Reading from the N-terminus, the 354-residue chain is UDP-N-acetylglucosamine--N-acetylmuramyl-(pentapeptide) pyrophosphoryl-undecaprenol N-acetylglucosamine transferase (354 aa).

Residues 15-17, asparagine 127, arginine 163, serine 191, isoleucine 242, 261-266, and glutamine 286 each bind UDP-N-acetyl-alpha-D-glucosamine; these read TGG and ALTVSE.

This sequence belongs to the glycosyltransferase 28 family. MurG subfamily.

It localises to the cell inner membrane. The catalysed reaction is di-trans,octa-cis-undecaprenyl diphospho-N-acetyl-alpha-D-muramoyl-L-alanyl-D-glutamyl-meso-2,6-diaminopimeloyl-D-alanyl-D-alanine + UDP-N-acetyl-alpha-D-glucosamine = di-trans,octa-cis-undecaprenyl diphospho-[N-acetyl-alpha-D-glucosaminyl-(1-&gt;4)]-N-acetyl-alpha-D-muramoyl-L-alanyl-D-glutamyl-meso-2,6-diaminopimeloyl-D-alanyl-D-alanine + UDP + H(+). It participates in cell wall biogenesis; peptidoglycan biosynthesis. In terms of biological role, cell wall formation. Catalyzes the transfer of a GlcNAc subunit on undecaprenyl-pyrophosphoryl-MurNAc-pentapeptide (lipid intermediate I) to form undecaprenyl-pyrophosphoryl-MurNAc-(pentapeptide)GlcNAc (lipid intermediate II). The sequence is that of UDP-N-acetylglucosamine--N-acetylmuramyl-(pentapeptide) pyrophosphoryl-undecaprenol N-acetylglucosamine transferase from Pasteurella multocida (strain Pm70).